A 418-amino-acid chain; its full sequence is Putative ion-transport protein YfeO (418 aa).

The next 12 helical transmembrane spans lie at 10 to 30 (LLLSLPAVAIGIASSLILIVV), 54 to 74 (DSPLWIIGVLTLTGIAVGLVI), 99 to 119 (ALPGLIVALILGLAGGVSLGP), 120 to 140 (EHPIMTINIALAVAIGARLLP), 149 to 169 (ILASAGTIGALFGTPVAAALI), 186 to 206 (LFAPLMAAAAGALTTGLFFHP), 223 to 243 (ILSGAIVAAIAIAAGMVAVWC), 258 to 278 (VLVLGIGGFILGILGVIGGPV), 300 to 320 (DYFLLAVIKLAALVVAAASGF), 322 to 342 (GGRIFPAVFVGVALGLMLHEH), 343 to 363 (VPAVPAAITVSCAILGIVLVV), and 371 to 391 (LFMAAVVVPNTTLLPLLCIVM).

The protein belongs to the chloride channel (TC 2.A.49) family.

The protein resides in the cell membrane. The chain is Putative ion-transport protein YfeO from Shigella boydii serotype 4 (strain Sb227).